The sequence spans 214 residues: Endothelial cell-specific chemotaxis regulator (214 aa).

Residues 1-18 form the signal peptide; the sequence is MRLGSAILGLLLLQGYSS. Topologically, residues 19–130 are extracellular; the sequence is QPTTTQTSQE…PTPTSESVLT (112 aa). Residues 23 to 107 form a disordered region; the sequence is TQTSQEILQK…DATPSPETTS (85 aa). Polar residues predominate over residues 28–57; that stretch reads EILQKSSQVSLVSNQPVTPRSSTMDKQSLS. Low complexity predominate over residues 80-90; the sequence is RSSSSSSSSSS. Residues 131-151 form a helical membrane-spanning segment; the sequence is VAAFGVISFIVILVVVVIILV. Over 152–214 the chain is Cytoplasmic; that stretch reads SVVSLRFKCR…KGSMSAEKIL (63 aa). Residues 163 to 184 form a disordered region; that stretch reads NKESEDPQKPGSSGLSESCSTA. Polar residues predominate over residues 172–184; the sequence is PGSSGLSESCSTA. A phosphoserine mark is found at serine 204 and serine 207.

It belongs to the ECSCR family. Interacts with FLNA. Interacts with the 20S proteasome subunit PSMA7. Post-translationally, may be heavily O-glycosylated. In terms of tissue distribution, expressed in all tissues examined, highest expression was observed in lung and spleen endothelial cells.

The protein resides in the cell membrane. It is found in the cytoplasm. In terms of biological role, regulates endothelial chemotaxis and tube formation. Has a role in angiogenesis and apoptosis via modulation of the actin cytoskeleton and facilitation of proteasomal degradation of the apoptosis inhibitors BIRC3/IAP1 and BIRC2/IAP2. The polypeptide is Endothelial cell-specific chemotaxis regulator (Ecscr) (Mus musculus (Mouse)).